The sequence spans 341 residues: D-aspartate oxidase (341 aa).

Aspartate 36, lysine 37, threonine 43, serine 44, methionine 50, glycine 307, and isoleucine 311 together coordinate FAD. A Microbody targeting signal motif is present at residues 339-341; that stretch reads SKL.

This sequence belongs to the DAMOX/DASOX family. Homotetramer. Interacts with PEX5; the interaction is direct and required for localization of DDO to the peroxisome. FAD is required as a cofactor. As to expression, expressed in epithelial cells of the renal proximal tubules (not detected in the glomeruli or renal distal tubules), liver, right atrium of heart, lung, chief cells of the gastric mucosa, choroid plexus, pia mater, brain stem, midbrain, pons, medulla oblongata, hypothalamus, hippocampus, cerebral cortex, cerebellum, ependyma, olfactory bulb and the pituitary, pineal, thyroid and adrenal glands (at protein level).

It is found in the peroxisome matrix. Its subcellular location is the cytoplasm. It localises to the cytosol. The enzyme catalyses D-aspartate + O2 + H2O = oxaloacetate + H2O2 + NH4(+). It catalyses the reaction D-glutamate + O2 + H2O = H2O2 + 2-oxoglutarate + NH4(+). Selectively catalyzes the oxidative deamination of acidic amino acids. Suppresses the level of D-aspartate in the brain, an amino acid that can act as an agonist for glutamate receptors. Protects the organism from the toxicity of D-amino acids. May also function in the intestine. The polypeptide is D-aspartate oxidase (DDO) (Sus scrofa (Pig)).